Reading from the N-terminus, the 607-residue chain is Elongation factor 4 (607 aa).

Residues 11-193 (SKIRNFSIIA…QIVEKVPAPT (183 aa)) form the tr-type G domain. Residues 23 to 28 (DHGKST) and 140 to 143 (NKID) each bind GTP.

Belongs to the TRAFAC class translation factor GTPase superfamily. Classic translation factor GTPase family. LepA subfamily.

The protein localises to the cell membrane. The catalysed reaction is GTP + H2O = GDP + phosphate + H(+). Required for accurate and efficient protein synthesis under certain stress conditions. May act as a fidelity factor of the translation reaction, by catalyzing a one-codon backward translocation of tRNAs on improperly translocated ribosomes. Back-translocation proceeds from a post-translocation (POST) complex to a pre-translocation (PRE) complex, thus giving elongation factor G a second chance to translocate the tRNAs correctly. Binds to ribosomes in a GTP-dependent manner. The sequence is that of Elongation factor 4 from Bacillus anthracis (strain CDC 684 / NRRL 3495).